Consider the following 374-residue polypeptide: uncharacterized protein (374 aa).

The stretch at 39 to 66 (RDVRKHLESRDAKQELIDSLEEAVRDSR) forms a coiled coil.

This is an uncharacterized protein from Mycobacterium tuberculosis (strain CDC 1551 / Oshkosh).